Reading from the N-terminus, the 1297-residue chain is Phosphoribosylformylglycinamidine synthase (1297 aa).

Residues 303 to 329 (ISPFPGAATGSGGEIRDEGATGRGAKP) are disordered. Residue 308–319 (GAATGSGGEIRD) coordinates ATP. The Mg(2+) site is built by Asp-680, Glu-719, Asn-723, and Asp-887. Residue Ser-889 coordinates ATP. The Glutamine amidotransferase type-1 domain occupies 1045 to 1297 (IAILREQGVN…RLFRNARMVF (253 aa)). Cys-1138 functions as the Nucleophile in the catalytic mechanism. Catalysis depends on residues His-1263 and Glu-1265.

The protein in the N-terminal section; belongs to the FGAMS family. Monomer.

The protein localises to the cytoplasm. It carries out the reaction N(2)-formyl-N(1)-(5-phospho-beta-D-ribosyl)glycinamide + L-glutamine + ATP + H2O = 2-formamido-N(1)-(5-O-phospho-beta-D-ribosyl)acetamidine + L-glutamate + ADP + phosphate + H(+). It functions in the pathway purine metabolism; IMP biosynthesis via de novo pathway; 5-amino-1-(5-phospho-D-ribosyl)imidazole from N(2)-formyl-N(1)-(5-phospho-D-ribosyl)glycinamide: step 1/2. Phosphoribosylformylglycinamidine synthase involved in the purines biosynthetic pathway. Catalyzes the ATP-dependent conversion of formylglycinamide ribonucleotide (FGAR) and glutamine to yield formylglycinamidine ribonucleotide (FGAM) and glutamate. The chain is Phosphoribosylformylglycinamidine synthase from Haemophilus influenzae (strain 86-028NP).